A 602-amino-acid polypeptide reads, in one-letter code: Bifunctional lycopene cyclase/phytoene synthase (602 aa).

A lycopene beta-cyclase region spans residues 1–241 (MYDYAFVHLK…IVGGMAAFDQ (241 aa)). 7 helical membrane passes run 6 to 26 (FVHL…AYPI), 30 to 50 (IHLI…LPWD), 76 to 96 (FEEL…YILF), 118 to 138 (VVKV…WNAA), 146 to 166 (YLGL…TLAG), 168 to 188 (FILS…TFYL), and 230 to 250 (MLIV…YAFP). The segment at 248 to 602 (AFPTLFPKVN…STLLRALYEQ (355 aa)) is phytoene synthase.

The protein in the N-terminal section; belongs to the lycopene beta-cyclase family. In the C-terminal section; belongs to the phytoene/squalene synthase family.

The protein resides in the membrane. It catalyses the reaction all-trans-lycopene = gamma-carotene. The enzyme catalyses gamma-carotene = all-trans-beta-carotene. It carries out the reaction 2 (2E,6E,10E)-geranylgeranyl diphosphate = 15-cis-phytoene + 2 diphosphate. The protein operates within carotenoid biosynthesis; beta-carotene biosynthesis. It participates in carotenoid biosynthesis; phytoene biosynthesis; all-trans-phytoene from geranylgeranyl diphosphate: step 1/1. In terms of biological role, bifunctional enzyme that catalyzes the reactions from geranylgeranyl diphosphate to phytoene (phytoene synthase) and from lycopene to beta-carotene via the intermediate gamma-carotene and from 3,4-didehydrolycopene to torulene (lycopene cyclase). Torulene is further processed to the acidic carotenoid neurosporaxanthin. The cyclase preferentially catalyzes single cyclizations at only one end of the substrate to produce monocyclic carotenoids. Neurosporaxanthin is synthesized from geranyl-geranyl pyrophosphate (GGPP) through several enzymatic activities. Phytoene synthase activity performed by the bifunctional enzyme al-2 first produces phytoene from geranyl-geranyl pyrophosphate (GGPP). The phytoene dehydrogenase al-1 then introduces 5 desaturations to lead to 3,4-didehydrolycopene via the intermediates phytofluene, zeta-carotene, neurosporene and lycopene. Al-2 cyclase activity then converts 3,4-didehydrolycopene into torulene. Al-2 can also convet lycopene into gamma-carotene which in turn is converted to beta-carotene by an additional al-2 cyclization reaction. Torulene is the substrate of the dioxidase cao-2 that breaks the molecule, removing five carbon atoms to yield beta-apo-4'-carotenal, whereas the aldehyde dehydrogenase ylo-1 mediates the last step by converting beta-apo-4'-carotenal into neurosporaxanthin. This chain is Bifunctional lycopene cyclase/phytoene synthase, found in Neurospora crassa (strain ATCC 24698 / 74-OR23-1A / CBS 708.71 / DSM 1257 / FGSC 987).